We begin with the raw amino-acid sequence, 108 residues long: Large ribosomal subunit protein uL24 (108 aa).

The disordered stretch occupies residues 46–65 (RHTRVQQSSRGSQSGGIVTQ). Positions 51–61 (QQSSRGSQSGG) are enriched in low complexity.

It belongs to the universal ribosomal protein uL24 family. In terms of assembly, part of the 50S ribosomal subunit.

Its function is as follows. One of two assembly initiator proteins, it binds directly to the 5'-end of the 23S rRNA, where it nucleates assembly of the 50S subunit. In terms of biological role, one of the proteins that surrounds the polypeptide exit tunnel on the outside of the subunit. The polypeptide is Large ribosomal subunit protein uL24 (Parafrankia sp. (strain EAN1pec)).